Reading from the N-terminus, the 500-residue chain is Aspartyl/glutamyl-tRNA(Asn/Gln) amidotransferase subunit B (500 aa).

It belongs to the GatB/GatE family. GatB subfamily. As to quaternary structure, heterotrimer of A, B and C subunits.

It catalyses the reaction L-glutamyl-tRNA(Gln) + L-glutamine + ATP + H2O = L-glutaminyl-tRNA(Gln) + L-glutamate + ADP + phosphate + H(+). It carries out the reaction L-aspartyl-tRNA(Asn) + L-glutamine + ATP + H2O = L-asparaginyl-tRNA(Asn) + L-glutamate + ADP + phosphate + 2 H(+). In terms of biological role, allows the formation of correctly charged Asn-tRNA(Asn) or Gln-tRNA(Gln) through the transamidation of misacylated Asp-tRNA(Asn) or Glu-tRNA(Gln) in organisms which lack either or both of asparaginyl-tRNA or glutaminyl-tRNA synthetases. The reaction takes place in the presence of glutamine and ATP through an activated phospho-Asp-tRNA(Asn) or phospho-Glu-tRNA(Gln). The polypeptide is Aspartyl/glutamyl-tRNA(Asn/Gln) amidotransferase subunit B (Brucella ovis (strain ATCC 25840 / 63/290 / NCTC 10512)).